The following is a 376-amino-acid chain: Probable transcription factor At1g61730 (376 aa).

The disordered stretch occupies residues 1–150; that stretch reads MTKKLNPLED…RVKKDEESVK (150 aa). Positions 17 to 40 are enriched in acidic residues; the sequence is SDEDDVETSEAGEASDDSSSSEED. Residue Ser49 is modified to Phosphoserine. A compositionally biased stretch (low complexity) spans 49-72; the sequence is SPSATTAAAPPAKSTAVSTAADSD. Residues 73–83 are compositionally biased toward acidic residues; that stretch reads SGSETETDSDS. The span at 87-103 shows a compositional bias: polar residues; it reads NPPNSGSGKTIALNTVN.

Belongs to the GeBP family. As to quaternary structure, interacts with DEK3.

In Arabidopsis thaliana (Mouse-ear cress), this protein is Probable transcription factor At1g61730.